A 98-amino-acid chain; its full sequence is Alpha-elicitin MGM-alpha (98 aa).

3 disulfide bridges follow: C3–C71, C27–C56, and C51–C95.

Belongs to the elicitin family.

It is found in the secreted. Its function is as follows. Induces local and distal defense responses (incompatible hypersensitive reaction) in plants from the solanaceae and cruciferae families. Elicits leaf necrosis and causes the accumulation of pathogenesis-related proteins. Might interact with the lipidic molecules of the plasma membrane. The chain is Alpha-elicitin MGM-alpha from Phytophthora megasperma (Potato pink rot fungus).